A 285-amino-acid chain; its full sequence is Inositol polyphosphate 1-phosphatase (285 aa).

Residues glutamate 68, aspartate 106, leucine 108, and aspartate 109 each coordinate Mg(2+). The 1D-myo-inositol 1,4-bisphosphate site is built by aspartate 109, glycine 110, threonine 111, serine 173, glycine 195, serine 197, and lysine 200. Residue aspartate 223 participates in Mg(2+) binding.

Belongs to the inositol monophosphatase superfamily. Monomer. It depends on Mg(2+) as a cofactor.

It is found in the cytoplasm. The catalysed reaction is 1D-myo-inositol 1,4-bisphosphate + H2O = 1D-myo-inositol 4-phosphate + phosphate. It carries out the reaction adenosine 3',5'-bisphosphate + H2O = AMP + phosphate. Partially inhibited by Li(2+). Functionally, catalyzes the hydrolysis of the 1-position phosphate from inositol 1,4-bisphosphate. Is also able to convert 3'(2')-phosphoadenosine 5'-phosphate (PAP) to AMP but with less efficiency. This is Inositol polyphosphate 1-phosphatase from Entamoeba histolytica (strain ATCC 30459 / HM-1:IMSS / ABRM).